Here is a 60-residue protein sequence, read N- to C-terminus: Large ribosomal subunit protein uL30 (60 aa).

This sequence belongs to the universal ribosomal protein uL30 family. In terms of assembly, part of the 50S ribosomal subunit.

This Lachnoclostridium phytofermentans (strain ATCC 700394 / DSM 18823 / ISDg) (Clostridium phytofermentans) protein is Large ribosomal subunit protein uL30.